A 296-amino-acid chain; its full sequence is 4-hydroxy-tetrahydrodipicolinate synthase (296 aa).

Thr-49 is a pyruvate binding site. Residue Tyr-137 is the Proton donor/acceptor of the active site. Lys-166 acts as the Schiff-base intermediate with substrate in catalysis. A pyruvate-binding site is contributed by Ile-208.

The protein belongs to the DapA family. Homotetramer; dimer of dimers.

The protein localises to the cytoplasm. The enzyme catalyses L-aspartate 4-semialdehyde + pyruvate = (2S,4S)-4-hydroxy-2,3,4,5-tetrahydrodipicolinate + H2O + H(+). Its pathway is amino-acid biosynthesis; L-lysine biosynthesis via DAP pathway; (S)-tetrahydrodipicolinate from L-aspartate: step 3/4. Its function is as follows. Catalyzes the condensation of (S)-aspartate-beta-semialdehyde [(S)-ASA] and pyruvate to 4-hydroxy-tetrahydrodipicolinate (HTPA). This is 4-hydroxy-tetrahydrodipicolinate synthase from Pelodictyon phaeoclathratiforme (strain DSM 5477 / BU-1).